Here is a 175-residue protein sequence, read N- to C-terminus: Epididymal-specific lipocalin-8 (175 aa).

The N-terminal stretch at methionine 1–serine 22 is a signal peptide. N-linked (GlcNAc...) asparagine glycosylation is found at asparagine 66 and asparagine 74. A disulfide bridge connects residues cysteine 79 and cysteine 166.

Belongs to the calycin superfamily. Lipocalin family. In terms of tissue distribution, predominantly expressed in epididymis.

The protein resides in the secreted. Its function is as follows. May play a role in male fertility. May act as a retinoid carrier protein within the epididymis. The polypeptide is Epididymal-specific lipocalin-8 (Lcn8) (Mus musculus (Mouse)).